The following is a 415-amino-acid chain: Multifunctional CCA protein (415 aa).

Gly8 and Arg11 together coordinate ATP. Positions 8 and 11 each coordinate CTP. Mg(2+)-binding residues include Asp21 and Asp23. 3 residues coordinate ATP: Arg91, Arg143, and Arg146. CTP contacts are provided by Arg91, Arg143, and Arg146. One can recognise an HD domain in the interval 232 to 333 (TGVHVMMVID…TRLLERCDAL (102 aa)).

It belongs to the tRNA nucleotidyltransferase/poly(A) polymerase family. Bacterial CCA-adding enzyme type 1 subfamily. In terms of assembly, monomer. Can also form homodimers and oligomers. Requires Mg(2+) as cofactor. The cofactor is Ni(2+).

It catalyses the reaction a tRNA precursor + 2 CTP + ATP = a tRNA with a 3' CCA end + 3 diphosphate. It carries out the reaction a tRNA with a 3' CCA end + 2 CTP + ATP = a tRNA with a 3' CCACCA end + 3 diphosphate. Catalyzes the addition and repair of the essential 3'-terminal CCA sequence in tRNAs without using a nucleic acid template. Adds these three nucleotides in the order of C, C, and A to the tRNA nucleotide-73, using CTP and ATP as substrates and producing inorganic pyrophosphate. tRNA 3'-terminal CCA addition is required both for tRNA processing and repair. Also involved in tRNA surveillance by mediating tandem CCA addition to generate a CCACCA at the 3' terminus of unstable tRNAs. While stable tRNAs receive only 3'-terminal CCA, unstable tRNAs are marked with CCACCA and rapidly degraded. The sequence is that of Multifunctional CCA protein from Cupriavidus pinatubonensis (strain JMP 134 / LMG 1197) (Cupriavidus necator (strain JMP 134)).